A 231-amino-acid polypeptide reads, in one-letter code: U1 small nuclear ribonucleoprotein C-1 (231 aa).

Residues 4-36 (YYCDYCDTYLTHDSPSVRKQHNAGYKHKANVRT) form a Matrin-type zinc finger. 3 stretches are compositionally biased toward pro residues: residues 117 to 127 (APGIPGYPGGP), 134 to 159 (GAPPGSMPQPGAPPGSMPQPGAPPGS), and 167 to 178 (LPRPPTLPPPTS). The tract at residues 117-231 (APGIPGYPGG…SYAQPSEGNH (115 aa)) is disordered. Low complexity predominate over residues 181 to 193 (PGAPIPNSAAPPA). The span at 199–217 (PPAPAGPTSGAPPAPPTAP) shows a compositional bias: pro residues.

Belongs to the U1 small nuclear ribonucleoprotein C family. In terms of assembly, U1 snRNP is composed of the 7 core Sm proteins B/B', D1, D2, D3, E, F and G that assemble in a heptameric protein ring on the Sm site of the small nuclear RNA to form the core snRNP, and at least 3 U1 snRNP-specific proteins U1-70K, U1-A and U1-C. U1-C interacts with U1 snRNA and the 5' splice-site region of the pre-mRNA.

It localises to the nucleus. Its function is as follows. Component of the spliceosomal U1 snRNP, which is essential for recognition of the pre-mRNA 5' splice-site and the subsequent assembly of the spliceosome. U1-C is directly involved in initial 5' splice-site recognition for both constitutive and regulated alternative splicing. The interaction with the 5' splice-site seems to precede base-pairing between the pre-mRNA and the U1 snRNA. Stimulates commitment or early (E) complex formation by stabilizing the base pairing of the 5' end of the U1 snRNA and the 5' splice-site region. This Sorghum bicolor (Sorghum) protein is U1 small nuclear ribonucleoprotein C-1.